A 925-amino-acid polypeptide reads, in one-letter code: MNNQTNQQSQTQSQSQQRINFDITGWEKKSKLSTQQYLLINNLNKSTQEKPLPQKYLEDKINNDIKKEENQQLQQQQQQQQQQQQQQQSPIIENFMDNFNPKTDIDNLSDFYQWYSIIDKNNPHLHQYEWFLETIVNYSKGSNQLLSMVENCDKLVESIQTDYSNLTKKTNQLNEDCEKFFNEELKLRYIAQSIHDKLKFYNQLEIQTKKFNTTNFNVTDSTFLTSLENLENSINFMKSNSTFMESNKYLTQYGFIFSRALGLIKDYISSNLKILSRDIINAQKQLKTSVSTPTSPQLQSSSGGSPLINDFSNSTDFNDLFQHSNIRFRAFAPKLRPLCLELEKRAIGPYLSYLYDTQNIYFNNRRSILSLIMFEKLQSLSKMTDISSMIRSSSLFMIQFYENEYQIYSNFFSPPDLNNNNNNNNNNNNNDNINNSTNINNSNNTNNNNQDIINNCPAFSNILDEYSQQLYDTIRPIYIHIHSFETLCNLAHLIRNELIDDLVQKSMKYSNGFKMTIERMLQDIQERLIFIIQTYIRDEIRSYHPNSDDLDYPNKLKIYVTAESTAVDGDGNGSGNSSPTLSYKSIYSTWYPTLEKSLTCLSKLYLVLETRIFEGLAQEVVEACTFTLIQASRLLLIQQKNDPYIILDSQLFLIKNLLTLREQIAPFDINFVIIEKIVDFPNLKHSLSTLYNVGSFLTLSTNNPILSLLSPRVTNTSIDSKKDLEKELKQSIESFILSNANTIIDPLLSLLTKISVFLNQSNKNQTDPMLLSQQSFADPQRIKEIIEQVKEKASNYLPQVIDRMKLYLSISTQILLMKPIRTNIIDSFDQINQYTKKYYTEDQIKIIDLQSLKLILDKILTPSKQSNNNNNNNNNNNNNNNNNNNNNNNNNNNNNNNNNNNNKNENNENENENNSNVNSPSPQQL.

Disordered regions lie at residues E68–Q88, D416–N446, and S863–L925. Composition is skewed to low complexity over residues Q71–Q88, N418–N446, and N867–N904.

The protein belongs to the COG3 family. Component of the conserved oligomeric Golgi complex which is composed of eight different subunits and is required for normal Golgi morphology and localization.

It is found in the golgi apparatus membrane. Required for normal Golgi function. In Dictyostelium discoideum (Social amoeba), this protein is Conserved oligomeric Golgi complex subunit 3 (cog3).